The sequence spans 587 residues: Kelch-like protein 3 (587 aa).

At serine 10 the chain carries Phosphoserine. One can recognise a BTB domain in the interval 50-117 (CDVMIVAEDV…IYTAEIEVTE (68 aa)). In terms of domain architecture, BACK spans 152 to 254 (CLGIRAFADV…PRDYLVQTVE (103 aa)). Threonine 295 is subject to Phosphothreonine. Kelch repeat units follow at residues 302-347 (VMIV…FMAG), 348-394 (HVYA…VLND), 396-441 (LYAV…VVEG), 442-490 (KLYA…VLSG), 491-537 (QLYA…AVNG), and 539-585 (LYVV…VIHK). A Phosphothreonine modification is found at threonine 375. Phosphoserine is present on serine 376. Serine 433 bears the Phosphoserine; by PKA and PKC mark.

Belongs to the KLHL3 family. Homodimer. Component of the BCR(KLHL3) E3 ubiquitin ligase complex, at least composed of CUL3 and KLHL3 and RBX1. Interacts with CLDN8. In terms of processing, phosphorylation at Ser-433 by PKA or PKC decreases the interaction with WNK1 and WNK4, leading to inhibit their degradation by the BCR(KLHL3) complex. Phosphorylated at Ser-433 by PKC in response to angiotensin II signaling, decreasing ability to promote degradation of WNK1 and WNK4, leading to activation of Na-Cl cotransporter SLC12A3/NCC. Phosphorylation at Ser-433 is increased by insulin. Dephosphorylated at Ser-433 by calcineurin PPP3CA, promoting degradation of WNK1 and WNK4. Widely expressed.

The protein resides in the cytoplasm. It is found in the cytosol. Its subcellular location is the cytoskeleton. It participates in protein modification; protein ubiquitination. Functionally, substrate-specific adapter of a BCR (BTB-CUL3-RBX1) E3 ubiquitin ligase complex that acts as a regulator of ion transport in the distal nephron. The BCR(KLHL3) complex acts by mediating ubiquitination and degradation of WNK1 and WNK4, two activators of Na-Cl cotransporter SLC12A3/NCC in distal convoluted tubule cells of kidney, thereby regulating NaCl reabsorption. The BCR(KLHL3) complex also mediates ubiquitination and degradation of WNK3. The BCR(KLHL3) complex also mediates ubiquitination of CLDN8, a tight-junction protein required for paracellular chloride transport in the kidney, leading to its degradation. The chain is Kelch-like protein 3 from Homo sapiens (Human).